The following is a 229-amino-acid chain: Wtf element wtf14 (229 aa).

A compositionally biased stretch (basic and acidic residues) spans 1–26; it reads MENNHHLAKDSLDELNPKRGKGEHET. Residues 1–27 form a disordered region; it reads MENNHHLAKDSLDELNPKRGKGEHETQ. A run of 4 helical transmembrane segments spans residues 71 to 91, 100 to 120, 151 to 171, and 188 to 208; these read IPAVLLPVFVINIALFKYLVF, VLFGLGNGGINIFSMWLLLAT, LYAILKLTFVNAFAIPLLMFF, and VIGVMLNVAYFIIEIENPGLF.

It belongs to the WTF family.

Its subcellular location is the endoplasmic reticulum membrane. May act in meiotic drive. In Schizosaccharomyces kambucha (Fission yeast), this protein is Wtf element wtf14.